Reading from the N-terminus, the 157-residue chain is Small ribosomal subunit protein uS7 (157 aa).

This sequence belongs to the universal ribosomal protein uS7 family. Part of the 30S ribosomal subunit. Contacts proteins S9 and S11.

One of the primary rRNA binding proteins, it binds directly to 16S rRNA where it nucleates assembly of the head domain of the 30S subunit. Is located at the subunit interface close to the decoding center, probably blocks exit of the E-site tRNA. The protein is Small ribosomal subunit protein uS7 of Leptospira borgpetersenii serovar Hardjo-bovis (strain JB197).